The chain runs to 365 residues: tRNA 2-selenouridine synthase (365 aa).

Residues 12–136 (FLDDVPMMDM…LRTFLLDTTQ (125 aa)) enclose the Rhodanese domain. Cys-95 acts as the S-selanylcysteine intermediate in catalysis.

The protein belongs to the SelU family. In terms of assembly, monomer.

It catalyses the reaction 5-methylaminomethyl-2-thiouridine(34) in tRNA + selenophosphate + (2E)-geranyl diphosphate + H2O + H(+) = 5-methylaminomethyl-2-selenouridine(34) in tRNA + (2E)-thiogeraniol + phosphate + diphosphate. It carries out the reaction 5-methylaminomethyl-2-thiouridine(34) in tRNA + (2E)-geranyl diphosphate = 5-methylaminomethyl-S-(2E)-geranyl-thiouridine(34) in tRNA + diphosphate. The catalysed reaction is 5-methylaminomethyl-S-(2E)-geranyl-thiouridine(34) in tRNA + selenophosphate + H(+) = 5-methylaminomethyl-2-(Se-phospho)selenouridine(34) in tRNA + (2E)-thiogeraniol. The enzyme catalyses 5-methylaminomethyl-2-(Se-phospho)selenouridine(34) in tRNA + H2O = 5-methylaminomethyl-2-selenouridine(34) in tRNA + phosphate. Its function is as follows. Involved in the post-transcriptional modification of the uridine at the wobble position (U34) of tRNA(Lys), tRNA(Glu) and tRNA(Gln). Catalyzes the conversion of 2-thiouridine (S2U-RNA) to 2-selenouridine (Se2U-RNA). Acts in a two-step process involving geranylation of 2-thiouridine (S2U) to S-geranyl-2-thiouridine (geS2U) and subsequent selenation of the latter derivative to 2-selenouridine (Se2U) in the tRNA chain. The protein is tRNA 2-selenouridine synthase of Pseudomonas putida (strain W619).